Here is a 202-residue protein sequence, read N- to C-terminus: Glycerol-3-phosphate acyltransferase (202 aa).

6 helical membrane-spanning segments follow: residues 2 to 22 (MIIV…GFVI), 54 to 74 (FLVT…PLWL), 85 to 105 (FFTN…YPVY), 120 to 140 (VVLG…FIVL), 141 to 161 (KIFK…VIGS), and 162 to 182 (LIIQ…ILII).

The protein belongs to the PlsY family. In terms of assembly, probably interacts with PlsX.

The protein resides in the cell membrane. It catalyses the reaction an acyl phosphate + sn-glycerol 3-phosphate = a 1-acyl-sn-glycero-3-phosphate + phosphate. It participates in lipid metabolism; phospholipid metabolism. In terms of biological role, catalyzes the transfer of an acyl group from acyl-phosphate (acyl-PO(4)) to glycerol-3-phosphate (G3P) to form lysophosphatidic acid (LPA). This enzyme utilizes acyl-phosphate as fatty acyl donor, but not acyl-CoA or acyl-ACP. The protein is Glycerol-3-phosphate acyltransferase of Staphylococcus aureus (strain USA300).